Consider the following 668-residue polypeptide: DNA ligase (668 aa).

NAD(+) is bound by residues 37-41 (DAVYD), 86-87 (SM), and E116. The N6-AMP-lysine intermediate role is filled by K118. Positions 139, 173, 288, and 312 each coordinate NAD(+). Residues C406, C409, C424, and C429 each coordinate Zn(2+). The BRCT domain occupies 590–668 (APDNFFKEKT…EQEAIAKIEK (79 aa)).

This sequence belongs to the NAD-dependent DNA ligase family. LigA subfamily. Requires Mg(2+) as cofactor. It depends on Mn(2+) as a cofactor.

The enzyme catalyses NAD(+) + (deoxyribonucleotide)n-3'-hydroxyl + 5'-phospho-(deoxyribonucleotide)m = (deoxyribonucleotide)n+m + AMP + beta-nicotinamide D-nucleotide.. Its function is as follows. DNA ligase that catalyzes the formation of phosphodiester linkages between 5'-phosphoryl and 3'-hydroxyl groups in double-stranded DNA using NAD as a coenzyme and as the energy source for the reaction. It is essential for DNA replication and repair of damaged DNA. In Lactobacillus johnsonii (strain CNCM I-12250 / La1 / NCC 533), this protein is DNA ligase.